The chain runs to 695 residues: Segment polarity protein dishevelled homolog DVL-1 (695 aa).

The DIX domain occupies 1-85 (MAETKIIYHM…RVVSWLVLAE (85 aa)). Residues 89–237 (SDAGSQGTDS…LRQADRASSF (149 aa)) are disordered. Residues 142–151 (SHRRERARRR) show a composition bias toward basic residues. Residues 152–171 (NREEAARTNGHPRGDRRRDV) are compositionally biased toward basic and acidic residues. A compositionally biased stretch (low complexity) spans 176-192 (DSASTALSSELESSSFV). Phosphoserine is present on serine 194. Residues 200 to 214 (TSRLSSSTEQSTSSR) are compositionally biased toward low complexity. Over residues 215-228 (LIRKHKRRRRKQRL) the composition is skewed to basic residues. In terms of domain architecture, PDZ spans 251-323 (TVTLNMERHH…NDDAVRVLRE (73 aa)). The DEP domain maps to 425 to 499 (PDSGLEIRDR…SEQCYYVFGD (75 aa)). Residues 543 to 667 (PGPPPCFPPA…PGGPPVRELA (125 aa)) are disordered. Residues 551-580 (PAYQDPGFSYGSGSTGSQQSEGSKSSGSTR) show a composition bias toward low complexity. The segment covering 625-636 (SRGSSPRSQASA) has biased composition (polar residues).

The protein belongs to the DSH family. Interacts with CXXC4. Interacts (via PDZ domain) with NXN. Interacts with BRD7 and INVS. Interacts (via PDZ domain) with VANGL1 and VANGL2 (via C-terminus). Interacts with ARRB1; the interaction is enhanced by phosphorylation of DVL1. Interacts with CYLD. Interacts (via PDZ domain) with RYK. Self-associates (via DIX domain) and forms higher homooligomers. Interacts (via PDZ domain) with DACT1 and FZD7, where DACT1 and FZD7 compete for the same binding site. Interacts (via DEP domain) with MUSK; the interaction is direct and mediates the formation a DVL1, MUSK and PAK1 ternary complex involved in AChR clustering. Interacts (via PDZ domain) with TMEM88. Interacts with DCDC2. Interacts with FOXK2. Interacts with PKD1 (via extracellular domain). Interacts (via PDZ domain) with CCDC88C/DAPLE; competes with CCDC88C for binding to frizzled receptor FZD7 and dissociates from CCDC88C following initiation of non-canonical Wnt signaling when CCDC88C displaces DVL1 from ligand-activated FZD7. Post-translationally, ubiquitinated; undergoes both 'Lys-48'-linked ubiquitination, leading to its subsequent degradation by the ubiquitin-proteasome pathway, and 'Lys-63'-linked ubiquitination. The interaction with INVS is required for ubiquitination. Deubiquitinated by CYLD, which acts on 'Lys-63'-linked ubiquitin chains.

It is found in the cell membrane. It localises to the cytoplasm. The protein resides in the cytosol. Its subcellular location is the cytoplasmic vesicle. Its function is as follows. Participates in Wnt signaling by binding to the cytoplasmic C-terminus of frizzled family members and transducing the Wnt signal to down-stream effectors. Plays a role both in canonical and non-canonical Wnt signaling. Plays a role in the signal transduction pathways mediated by multiple Wnt genes. Required for LEF1 activation upon WNT1 and WNT3A signaling. DVL1 and PAK1 form a ternary complex with MUSK which is important for MUSK-dependent regulation of AChR clustering during the formation of the neuromuscular junction (NMJ). The protein is Segment polarity protein dishevelled homolog DVL-1 (DVL1) of Homo sapiens (Human).